Reading from the N-terminus, the 176-residue chain is Transcription factor 21 (176 aa).

Positions 1–84 (MSTGSISDVD…QVQRNAANAR (84 aa)) are disordered. Over residues 31–44 (GTSNESTEDSSNCE) the composition is skewed to polar residues. In terms of domain architecture, bHLH spans 76-128 (VQRNAANARERARMRVLSKAFSRLKTTLPWVPPDTKLSKLDTLRLASSYIAHL).

Efficient DNA binding requires dimerization with another bHLH protein. In terms of tissue distribution, expressed in the cranial paraxial mesoderm from 20 hpf and subsequently becomes restricted to the pharyngeal mesoderm that will form the muscle. Expression in the proepicardial organ is first seen at 40hpf in a cluster of cells between the myocardium and yolk. Also expressed in the developing arches. Expression begins to surround the heart by day 3 of development, and by 96 hpf, expression is restricted to the outer epicardial layer surrounding the myocardium.

The protein resides in the nucleus. In terms of biological role, involved in epithelial-mesenchymal interactions in kidney and lung morphogenesis that include epithelial differentiation and branching morphogenesis. The protein is Transcription factor 21 of Danio rerio (Zebrafish).